The following is a 205-amino-acid chain: MISINIVGEVDSILIESILELDRRITINSSNIDPNFIIVYEKFDEYYTFLKEFIGKIPIVIITGNTSYSRKCYFYSLGIDLYIIKNNESKSLILCRILNEIKKYIKYVNDDFIDFENHQFVFNNYLVNLSNIELKILRCLYINLGRYVSKEELKKGVWDTEDFVDSNTINVYIHRLRDSLKNCKEIEIINERKLGYKILIRKDLC.

The ompR/PhoB-type DNA-binding region spans 103–200 (KYIKYVNDDF…ERKLGYKILI (98 aa)).

This sequence to the C-terminus of E.coli phosphate regulon transcriptional regulatory protein PhoB.

This Staphylococcus epidermidis protein is Putative epidermin response regulator (epiQ).